The sequence spans 235 residues: N-alpha-acetyltransferase 10 (235 aa).

Met-1 carries the N-acetylmethionine modification. Residues 1-58 (MNIRNARPEDLMNMQHCNLLCLPENYQMKYYFYHGLSWPQLSYIAEDENGKIVGYVLA) are interaction with NAA15. The region spanning 1 to 152 (MNIRNARPED…DAYAMKRDLT (152 aa)) is the N-acetyltransferase domain. An N6-acetyllysine; by autocatalysis modification is found at Lys-136. Positions 178-235 (NKVESKGNSPPSSGEACREEKGLAAEDSGGDSKDLSEVSETTESTDVKDSSEASDSAS) are disordered. Residues Ser-182, Ser-186, and Ser-205 each carry the phosphoserine modification. Residues 193–213 (ACREEKGLAAEDSGGDSKDLS) show a composition bias toward basic and acidic residues. Ser-209 carries the phosphoserine; by IKKB modification. Phosphoserine is present on residues Ser-213 and Ser-216.

It belongs to the acetyltransferase family. ARD1 subfamily. As to quaternary structure, component of the N-terminal acetyltransferase A complex (also called the NatA complex) composed of NAA10 and NAA15. Within the complex interacts with NAA15. Component of the N-terminal acetyltransferase A (NatA)/HYPK complex at least composed of NAA10, NAA15 and HYPK, which has N-terminal acetyltransferase activity. In complex with NAA15, interacts with HYPK. Component of the N-terminal acetyltransferase E (NatE) complex at least composed of NAA10, NAA15 and NAA50. Within the complex interacts with NAA15; the interaction is required for binding to NAAT50. Interacts with NAAT50. The interaction of the NatA complex with NAA50 reduces the acetylation activity of the NatA complex. Component of the N-terminal acetyltransferase E (NatE)/HYPK complex at least composed of NAA10, NAA15, NAA50 and HYPK. In complex with NAA15, interacts with HYPK; the interaction with HYPK reduces the capacity of the NatA complex to interact with NAA50. Interacts with HIF1A (via its ODD domain); the interaction increases HIF1A protein stability during normoxia, an down-regulates it when induced by hypoxia. Interacts with the ribosome. Binds to MYLK. Interacts with NAA16. Interacts (via its C-terminal domain) with TSC2, leading to its acetylation. Interacts with IKBKB. Interacts with HSPA1A and HSPA1B leading to its acetylation. In terms of processing, cleaved by caspases during apoptosis. Phosphorylation by IKBKB/IKKB at Ser-209 promotes its proteasome-mediated degradation. Post-translationally, autoacetylated at Lys-136 which stimulates its catalytic activity. In terms of tissue distribution, ubiquitous.

It is found in the cytoplasm. It localises to the nucleus. It catalyses the reaction N-terminal glycyl-[protein] + acetyl-CoA = N-terminal N(alpha)-acetylglycyl-[protein] + CoA + H(+). The catalysed reaction is N-terminal L-alanyl-[protein] + acetyl-CoA = N-terminal N(alpha)-acetyl-L-alanyl-[protein] + CoA + H(+). It carries out the reaction N-terminal L-seryl-[protein] + acetyl-CoA = N-terminal N(alpha)-acetyl-L-seryl-[protein] + CoA + H(+). The enzyme catalyses N-terminal L-valyl-[protein] + acetyl-CoA = N-terminal N(alpha)-acetyl-L-valyl-[protein] + CoA + H(+). It catalyses the reaction N-terminal L-cysteinyl-[protein] + acetyl-CoA = N-terminal N(alpha)-acetyl-L-cysteinyl-[protein] + CoA + H(+). The catalysed reaction is N-terminal L-threonyl-[protein] + acetyl-CoA = N-terminal N(alpha)-acetyl-L-threonyl-[protein] + CoA + H(+). Functionally, catalytic subunit of N-terminal acetyltransferase complexes which display alpha (N-terminal) acetyltransferase activity. Acetylates amino termini that are devoid of initiator methionine. The alpha (N-terminal) acetyltransferase activity may be important for vascular, hematopoietic and neuronal growth and development. Without NAA15, displays epsilon (internal) acetyltransferase activity towards HIF1A, thereby promoting its degradation. Represses MYLK kinase activity by acetylation, and thus represses tumor cell migration. Acetylates, and stabilizes TSC2, thereby repressing mTOR activity and suppressing cancer development. Acetylates HSPA1A and HSPA1B at 'Lys-77' which enhances its chaperone activity and leads to preferential binding to co-chaperone HOPX. Acetylates HIST1H4A. Acts as a negative regulator of sister chromatid cohesion during mitosis. This chain is N-alpha-acetyltransferase 10 (NAA10), found in Homo sapiens (Human).